The sequence spans 374 residues: Bifunctional enzyme IspD/IspF (374 aa).

Residues 1-213 (MLDVTLIVLC…PCLKAPSNNF (213 aa)) are 2-C-methyl-D-erythritol 4-phosphate cytidylyltransferase. The segment at 214–374 (FTGTGFDIHA…TLKYYNWKKR (161 aa)) is 2-C-methyl-D-erythritol 2,4-cyclodiphosphate synthase. A divalent metal cation is bound by residues D220 and H222. Residues 220-222 (DIH) and 246-247 (HS) each bind 4-CDP-2-C-methyl-D-erythritol 2-phosphate. Residue H254 participates in a divalent metal cation binding. 4-CDP-2-C-methyl-D-erythritol 2-phosphate-binding positions include 268 to 270 (DIG), 273 to 277 (FPDTD), 344 to 347 (TTAE), F351, and R354.

The protein in the N-terminal section; belongs to the IspD/TarI cytidylyltransferase family. IspD subfamily. In the C-terminal section; belongs to the IspF family. It depends on a divalent metal cation as a cofactor.

The catalysed reaction is 2-C-methyl-D-erythritol 4-phosphate + CTP + H(+) = 4-CDP-2-C-methyl-D-erythritol + diphosphate. It catalyses the reaction 4-CDP-2-C-methyl-D-erythritol 2-phosphate = 2-C-methyl-D-erythritol 2,4-cyclic diphosphate + CMP. Its pathway is isoprenoid biosynthesis; isopentenyl diphosphate biosynthesis via DXP pathway; isopentenyl diphosphate from 1-deoxy-D-xylulose 5-phosphate: step 2/6. It participates in isoprenoid biosynthesis; isopentenyl diphosphate biosynthesis via DXP pathway; isopentenyl diphosphate from 1-deoxy-D-xylulose 5-phosphate: step 4/6. Its function is as follows. Bifunctional enzyme that catalyzes the formation of 4-diphosphocytidyl-2-C-methyl-D-erythritol from CTP and 2-C-methyl-D-erythritol 4-phosphate (MEP) (IspD), and catalyzes the conversion of 4-diphosphocytidyl-2-C-methyl-D-erythritol 2-phosphate (CDP-ME2P) to 2-C-methyl-D-erythritol 2,4-cyclodiphosphate (ME-CPP) with a corresponding release of cytidine 5-monophosphate (CMP) (IspF). The chain is Bifunctional enzyme IspD/IspF from Aliarcobacter butzleri (strain RM4018) (Arcobacter butzleri).